The primary structure comprises 113 residues: Ferredoxin-1 (113 aa).

4Fe-4S ferredoxin-type domains are found at residues 2-30 and 31-60; these read TYIV…YEGE and NFLV…PDTE. Residues Cys-9 and Cys-17 each coordinate [3Fe-4S] cluster. [4Fe-4S] cluster contacts are provided by Cys-21, Cys-40, Cys-43, and Cys-46. Position 50 (Cys-50) interacts with [3Fe-4S] cluster.

It depends on [4Fe-4S] cluster as a cofactor. The cofactor is [3Fe-4S] cluster.

The protein is Ferredoxin-1 (fdxA) of Caulobacter vibrioides (strain ATCC 19089 / CIP 103742 / CB 15) (Caulobacter crescentus).